The sequence spans 544 residues: Chaperonin GroEL (544 aa).

Residues 29-32 (TLGP), 86-90 (DGTTT), Gly-413, 476-478 (NAA), and Asp-492 contribute to the ATP site.

Belongs to the chaperonin (HSP60) family. In terms of assembly, forms a cylinder of 14 subunits composed of two heptameric rings stacked back-to-back. Interacts with the co-chaperonin GroES.

The protein resides in the cytoplasm. The catalysed reaction is ATP + H2O + a folded polypeptide = ADP + phosphate + an unfolded polypeptide.. Its function is as follows. Together with its co-chaperonin GroES, plays an essential role in assisting protein folding. The GroEL-GroES system forms a nano-cage that allows encapsulation of the non-native substrate proteins and provides a physical environment optimized to promote and accelerate protein folding. The protein is Chaperonin GroEL of Bacillus licheniformis (strain ATCC 14580 / DSM 13 / JCM 2505 / CCUG 7422 / NBRC 12200 / NCIMB 9375 / NCTC 10341 / NRRL NRS-1264 / Gibson 46).